A 323-amino-acid polypeptide reads, in one-letter code: Pantothenate kinase (323 aa).

Polar residues predominate over residues methionine 1–valine 12. A disordered region spans residues methionine 1–tyrosine 24. Glycine 108 to serine 115 is a binding site for ATP.

It belongs to the prokaryotic pantothenate kinase family.

It localises to the cytoplasm. It carries out the reaction (R)-pantothenate + ATP = (R)-4'-phosphopantothenate + ADP + H(+). It functions in the pathway cofactor biosynthesis; coenzyme A biosynthesis; CoA from (R)-pantothenate: step 1/5. The polypeptide is Pantothenate kinase (Corynebacterium glutamicum (strain R)).